A 518-amino-acid chain; its full sequence is MVSSFSSKRLGDTMDSLALGSNWAGGVAIVLFLAPLALHLVSSYLFPSTSTVINSGRAWDIFRTTAKKRFRSDAARLLQNGFEKSPDAFRILTDNGPLLVLSPRYAREVRSDDRLSLDHFIASEFHPDIPGFEPFKLILDPRNPLNTILKTSLTQALEDLSVEVADALSTALTDDSEWHEISPCQTALKLVAQMASKAFIGPEKCRDPKWHNVIITYTHNVYRAAQALHFWPKFLRPIVARFLPACQTLQAQIAEAREILEPLVAQRRADRACRAAQGKPVPSRADVIDWLEDSHGDQPYDPVAAQLLLSFAAIHGTSNLLAQALMDLCTAPDLIRDIRAEITSVLGDAGLTRAALYRLKLMDSALKESQRLAPNRLLSMGRIAQSDMHLSDGLRIPRGTTLMVSAHAMWEPQIYPDPRRYDGYRFYKLRQVPGQEGQHQLVSATEKHMGFGYGKHACPGRFFAAAEIKVALCHILLKYDLEHRGGGPPPRVWSQGIHLFPDPTARIRVRRRKEEISL.

A helical membrane pass occupies residues G26–F46. Residue C458 participates in heme binding.

Belongs to the cytochrome P450 family. Heme serves as cofactor.

It is found in the membrane. The protein operates within secondary metabolite biosynthesis; terpenoid biosynthesis. Its function is as follows. Cytochrome P450 monooxygenase; part of the gene cluster that mediates the biosynthesis of pyripyropene A, a specific human acyl-coenzyme A:cholesterol acyltransferase 2 inhibitor. The first step of the pathway is the synthesis of nicotinyl-CoA from nicotinic acid by the nicotinic acid-CoA ligase pyr1. Nicotinyl-CoA is then a substrate of polyketide synthase pyr2 to produce 4-hydroxy-6-(3-pyridinyl)-2H-pyran-2-one (HPPO) which is further prenylated by the polyprenyl transferase pyr6 to yield farnesyl-HPPO. The next steps consist of an epoxidation of farnesyl-HPPO to epoxyfarnesyl-HPPO by FAD-dependent monooxygenase pyr5 and a cyclization of the terpenoid portion by the terpene cyclase pyr4 to yield deacetyl-pyripyropene E. The 2 cytochrome P450 monooxygenases pyr3 and pyr9, and the 2 acetyltransferases pyr7 and pyr8 are involved in the conversion of deacetyl-pyripyropene E into pyripyropene A through several cycles of oxidation and acetylation steps. Pyr7 acetylates deacetyl-pyripyropene E to pyripyropene E which is oxidized to 11-deacetyl-pyripyropene O by pyr3, which is in turn acetylated into pyripyropene O by pyr8. Pyripyropene O is then oxidized to deacetyl-pyripyropene A by pyr9. Deacetyl-pyripyropene A is finally acetylated to pyripyropene A by pyr8. This chain is Cytochrome P450 monooxygenase pyr3, found in Aspergillus fumigatus (strain ATCC MYA-4609 / CBS 101355 / FGSC A1100 / Af293) (Neosartorya fumigata).